We begin with the raw amino-acid sequence, 156 residues long: Small ribosomal subunit protein uS7 (156 aa).

Belongs to the universal ribosomal protein uS7 family. Part of the 30S ribosomal subunit. Contacts proteins S9 and S11.

In terms of biological role, one of the primary rRNA binding proteins, it binds directly to 16S rRNA where it nucleates assembly of the head domain of the 30S subunit. Is located at the subunit interface close to the decoding center, probably blocks exit of the E-site tRNA. The sequence is that of Small ribosomal subunit protein uS7 from Bacillus cereus (strain G9842).